An 836-amino-acid polypeptide reads, in one-letter code: Probable ribonuclease ZC3H12B (836 aa).

The tract at residues 1–92 (MTATAEVETP…SPCLDRPSFS (92 aa)) is disordered. Basic and acidic residues predominate over residues 8-28 (ETPKMEKSASKEEKQQPKQDS). Residues 35–46 (DSEEWMSSESDP) show a composition bias toward acidic residues. Polar residues predominate over residues 50-60 (SLKSSDNSKSC). A compositionally biased stretch (basic residues) spans 70–80 (KEMHSKPHRQL). Positions 190–345 (LRPVVIDGSN…LGRHGPSLEN (156 aa)) constitute an RNase NYN domain. The C3H1-type zinc-finger motif lies at 355–380 (EHKKQPCPYGKKCTYGHKCKYYHPER).

It belongs to the ZC3H12 family. Mg(2+) is required as a cofactor.

In terms of biological role, may function as RNase and regulate the levels of target RNA species. The protein is Probable ribonuclease ZC3H12B (ZC3H12B) of Homo sapiens (Human).